A 506-amino-acid polypeptide reads, in one-letter code: Histone acetyltransferase esa-1 (506 aa).

Positions 1 to 24 (MSPPGGDATVGSDEKRQKGKATPD) are disordered. One can recognise a Tudor-knot domain in the interval 26–78 (IKMGCIAMVMKEGQLRRAEILSIKDTKSGRQFYCNFDNFNKRLDEWVPAARID). The interval 82–215 (DVEWPNPDKD…LRTSGSMTQN (134 aa)) is disordered. Positions 87–98 (NPDKDKQKDAKT) are enriched in basic and acidic residues. The segment covering 109 to 120 (QPSKKNNQKKAS) has biased composition (basic residues). The span at 167-178 (GGDKGVKRKADE) shows a compositional bias: basic and acidic residues. Residues 220–494 (SRIRNISKVE…IDPERIQWKP (275 aa)) enclose the MYST-type HAT domain. Residues 253–278 (IYICEFCLSYYGELKSFVRHRQKCTL) form a C2HC MYST-type zinc finger. An ESA1-RPD3 motif motif is present at residues 303–324 (RTWCRNLCLLSKMFLDHKTLYY). The residue at position 320 (lysine 320) is an N6-acetyllysine; by autocatalysis. Acetyl-CoA contacts are provided by residues 361-365 (ACILT) and 370-376 (QRKGYGR). Glutamate 396 serves as the catalytic Proton donor/acceptor. Serine 400 serves as a coordination point for acetyl-CoA.

The protein belongs to the MYST (SAS/MOZ) family. As to quaternary structure, component of the NuA4 histone acetyltransferase complex. Post-translationally, autoacetylation at Lys-320 is required for proper function.

Its subcellular location is the nucleus. The protein resides in the chromosome. It catalyses the reaction L-lysyl-[histone] + acetyl-CoA = N(6)-acetyl-L-lysyl-[histone] + CoA + H(+). It carries out the reaction L-lysyl-[protein] + acetyl-CoA = N(6)-acetyl-L-lysyl-[protein] + CoA + H(+). The enzyme catalyses 2-hydroxyisobutanoyl-CoA + L-lysyl-[protein] = N(6)-(2-hydroxyisobutanoyl)-L-lysyl-[protein] + CoA + H(+). The catalysed reaction is (2E)-butenoyl-CoA + L-lysyl-[protein] = N(6)-(2E)-butenoyl-L-lysyl-[protein] + CoA + H(+). Its function is as follows. Catalytic component of the NuA4 histone acetyltransferase (HAT) complex which is involved in epigenetic transcriptional activation of selected genes principally by acetylation of nucleosomal histones H4, H3, H2B, H2A and H2A variant H2A.Z. Acetylates histone H4 to form H4K5ac, H4K8ac, H4K12ac and H4K16ac, histone H3 to form H3K14ac, and histone H2A to form H2AK4ac and H2AK7ac. The NuA4 complex is involved in the DNA damage response and is required for chromosome segregation. The NuA4 complex plays a direct role in repair of DNA double-strand breaks (DSBs) through homologous recombination. Recruitment to promoters depends on H3K4me. Also acetylates non-histone proteins. In addition to protein acetyltransferase, can use different acyl-CoA substrates, such as 2-hydroxyisobutanoyl-CoA (2-hydroxyisobutyryl-CoA) or (2E)-butenoyl-CoA (crotonyl-CoA), and is able to mediate protein 2-hydroxyisobutyrylation and crotonylation, respectively. The chain is Histone acetyltransferase esa-1 (esa-1) from Neurospora crassa (strain ATCC 24698 / 74-OR23-1A / CBS 708.71 / DSM 1257 / FGSC 987).